The primary structure comprises 526 residues: Alpha-1,3-mannosyl-glycoprotein 4-beta-N-acetylglucosaminyltransferase A (526 aa).

Residues 1–6 (MRLRNG) are Cytoplasmic-facing. Residues 7-27 (TVATALVFVTSFLTLSWYTTW) form a helical; Signal-anchor for type II membrane protein membrane-spanning segment. The stretch at 28–63 (QNGKEKLIAYQREFLALKERLRVAEHRISQRSSELN) forms a coiled coil. Over 28–526 (QNGKEKLIAY…NEIHIKKVTS (499 aa)) the chain is Lumenal. The N-linked (GlcNAc...) asparagine glycan is linked to Asn449. Ser465 carries the post-translational modification Phosphoserine.

The protein belongs to the glycosyltransferase 54 family. Requires a divalent metal cation as cofactor. In terms of processing, N-glycosylated.

It is found in the golgi apparatus membrane. It localises to the secreted. The catalysed reaction is N(4)-{beta-D-GlcNAc-(1-&gt;2)-alpha-D-Man-(1-&gt;3)-[beta-D-GlcNAc-(1-&gt;2)-alpha-D-Man-(1-&gt;6)]-beta-D-Man-(1-&gt;4)-beta-D-GlcNAc-(1-&gt;4)-beta-D-GlcNAc}-L-asparaginyl-[protein] + UDP-N-acetyl-alpha-D-glucosamine = N(4)-{beta-D-GlcNAc-(1-&gt;2)-[beta-D-GlcNAc-(1-&gt;4)]-alpha-D-Man-(1-&gt;3)-[beta-D-GlcNAc-(1-&gt;2)-alpha-D-Man-(1-&gt;6)]-beta-D-Man-(1-&gt;4)-beta-D-GlcNAc-(1-&gt;4)-beta-D-GlcNAc}-L-asparaginyl-[protein] + UDP + H(+). It carries out the reaction an N(4)-{beta-D-GlcNAc-(1-&gt;2)-alpha-D-Man-(1-&gt;3)-[alpha-D-Man-(1-&gt;6)]-beta-D-Man-(1-&gt;4)-beta-D-GlcNAc-(1-&gt;4)-beta-D-GlcNAc}-L-asparaginyl-[protein] + UDP-N-acetyl-alpha-D-glucosamine = an N(4)-{beta-D-GlcNAc-(1-&gt;2)-[beta-D-GlcNAc-(1-&gt;4)]-alpha-D-Man-(1-&gt;3)-[alpha-D-Man-(1-&gt;6)]-beta-D-Man-(1-&gt;4)-beta-D-GlcNAc-(1-&gt;4)-beta-D-GlcNAc}-L-asparaginyl-[protein] + UDP + H(+). The enzyme catalyses an N(4)-{beta-D-GlcNAc-(1-&gt;2)-alpha-D-Man-(1-&gt;3)-[beta-D-GlcNAc-(1-&gt;2)-[beta-D-GlcNAc-(1-&gt;6)]-alpha-D-Man-(1-&gt;6)]-beta-D-Man-(1-&gt;4)-beta-D-GlcNAc-(1-&gt;4)-beta-D-GlcNAc}-L-asparaginyl-[protein] + UDP-N-acetyl-alpha-D-glucosamine = an N(4)-{beta-D-GlcNAc-(1-&gt;2)-[beta-D-GlcNAc-(1-&gt;4)]-alpha-D-Man-(1-&gt;3)-[beta-D-GlcNAc-(1-&gt;2)-[beta-D-GlcNAc-(1-&gt;6)]-alpha-D-Man-(1-&gt;6)]-beta-D-Man-(1-&gt;4)-beta-D-GlcNAc-(1-&gt;4)-beta-D-GlcNAc}-L-asparaginyl-[protein] + UDP + H(+). It catalyses the reaction an N(4)-{beta-D-GlcNAc-(1-&gt;2)-alpha-D-Man-(1-&gt;3)-[beta-D-GlcNAc-(1-&gt;2)-alpha-D-Man-(1-&gt;6)]-beta-D-Man-(1-&gt;4)-beta-D-GlcNAc-(1-&gt;4)-[alpha-L-Fuc-(1-&gt;6)]-beta-D-GlcNAc}-L-asparaginyl-[protein] + UDP-N-acetyl-alpha-D-glucosamine = N(4)-{beta-D-GlcNAc-(1-&gt;2)-[beta-D-GlcNAc-(1-&gt;4)]-alpha-D-Man-(1-&gt;3)-[beta-D-GlcNAc-(1-&gt;2)-alpha-D-Man-(1-&gt;6)]-beta-D-Man-(1-&gt;4)-beta-D-GlcNAc-(1-&gt;4)-[alpha-L-Fuc-(1-&gt;6)]-beta-D-GlcNAc}-asparaginyl-[protein] + UDP + H(+). The catalysed reaction is an N(4)-{beta-D-GlcNAc-(1-&gt;2)-alpha-D-Man-(1-&gt;3)-[beta-D-Gal-(1-&gt;4)-beta-D-GlcNAc-(1-&gt;2)-alpha-D-Man-(1-&gt;6)]-beta-D-Man-(1-&gt;4)-beta-D-GlcNAc-(1-&gt;4)-beta-D-GlcNAc}-L-asparaginyl-[protein] + UDP-N-acetyl-alpha-D-glucosamine = an N(4)-{beta-D-GlcNAc-(1-&gt;2)-[beta-D-GlcNAc-(1-&gt;4)]-alpha-D-Man-(1-&gt;3)-[beta-D-Gal-(1-&gt;4)-beta-D-GlcNAc-(1-&gt;2)-alpha-D-Man-(1-&gt;6)]-beta-D-Man-(1-&gt;4)-beta-D-GlcNAc-(1-&gt;4)-beta-D-GlcNAc}-L-asparaginyl-[protein] + UDP + H(+). It carries out the reaction N(4)-{beta-D-GlcNAc-(1-&gt;2)-alpha-D-Man-(1-&gt;3)-[alpha-D-Man-(1-&gt;3)-{alpha-D-Man-(1-&gt;6)}-alpha-D-Man-(1-&gt;6)]-beta-D-Man-(1-&gt;4)-beta-D-GlcNAc-(1-&gt;4)-beta-D-GlcNAc}-asparaginyl-[protein] + UDP-N-acetyl-alpha-D-glucosamine = N(4)-{beta-D-GlcNAc-(1-&gt;2)-[beta-D-GlcNAc-(1-&gt;4)]-alpha-D-Man-(1-&gt;3)-[alpha-D-Man-(1-&gt;3)-{alpha-D-Man-(1-&gt;6)}-alpha-D-Man-(1-&gt;6)]-beta-D-Man-(1-&gt;4)-beta-D-GlcNAc-(1-&gt;4)-beta-D-GlcNAc}-asparaginyl-[protein] + UDP + H(+). The enzyme catalyses N(4)-{beta-D-GlcNAc-(1-&gt;2)-alpha-D-Man-(1-&gt;3)-beta-D-Man-(1-&gt;4)-beta-D-GlcNAc-(1-&gt;4)-beta-D-GlcNAc}-asparaginyl-[protein] + UDP-N-acetyl-alpha-D-glucosamine = N(4)-{beta-D-GlcNAc-(1-&gt;2)-[beta-D-GlcNAc-(1-&gt;4)]-alpha-D-Man-(1-&gt;3)-beta-D-Man-(1-&gt;4)-beta-D-GlcNAc-(1-&gt;4)-beta-D-GlcNAc}-asparaginyl-[protein] + UDP + H(+). It participates in protein modification; protein glycosylation. Inhibited by UDP. Glycosyltransferase that catalyze the transfer of GlcNAc from UDP-GlcNAc to the GlcNAcbeta1-2Manalpha1-3 arm of the core structure of N-linked glycans through a beta1-4 linkage and participates in the production of tri- and tetra-antennary N-linked sugar chains. Involved in glucose transport by mediating SLC2A2/GLUT2 glycosylation, thereby controlling cell-surface expression of SLC2A2 in pancreatic beta cells. In Rattus norvegicus (Rat), this protein is Alpha-1,3-mannosyl-glycoprotein 4-beta-N-acetylglucosaminyltransferase A.